The sequence spans 243 residues: Carboxy-S-adenosyl-L-methionine synthase (243 aa).

S-adenosyl-L-methionine-binding positions include tyrosine 35, 68 to 70 (GCS), 92 to 93 (DN), and arginine 199.

The protein belongs to the class I-like SAM-binding methyltransferase superfamily. Cx-SAM synthase family. In terms of assembly, homodimer.

It catalyses the reaction prephenate + S-adenosyl-L-methionine = carboxy-S-adenosyl-L-methionine + 3-phenylpyruvate + H2O. Functionally, catalyzes the conversion of S-adenosyl-L-methionine (SAM) to carboxy-S-adenosyl-L-methionine (Cx-SAM). The sequence is that of Carboxy-S-adenosyl-L-methionine synthase from Helicobacter pylori (strain P12).